The following is a 109-amino-acid chain: Large ribosomal subunit protein uL24 (109 aa).

Belongs to the universal ribosomal protein uL24 family. Part of the 50S ribosomal subunit.

Functionally, one of two assembly initiator proteins, it binds directly to the 5'-end of the 23S rRNA, where it nucleates assembly of the 50S subunit. Its function is as follows. One of the proteins that surrounds the polypeptide exit tunnel on the outside of the subunit. This Ehrlichia chaffeensis (strain ATCC CRL-10679 / Arkansas) protein is Large ribosomal subunit protein uL24.